Consider the following 268-residue polypeptide: NADH-quinone oxidoreductase subunit B 1 (268 aa).

Residues Cys42, Cys43, Cys108, and Cys138 each coordinate [4Fe-4S] cluster.

Belongs to the complex I 20 kDa subunit family. NDH-1 is composed of 14 different subunits. Subunits NuoB, C, D, E, F, and G constitute the peripheral sector of the complex. [4Fe-4S] cluster is required as a cofactor.

The protein resides in the cell membrane. It catalyses the reaction a quinone + NADH + 5 H(+)(in) = a quinol + NAD(+) + 4 H(+)(out). NDH-1 shuttles electrons from NADH, via FMN and iron-sulfur (Fe-S) centers, to quinones in the respiratory chain. The immediate electron acceptor for the enzyme in this species is believed to be ubiquinone. Couples the redox reaction to proton translocation (for every two electrons transferred, four hydrogen ions are translocated across the cytoplasmic membrane), and thus conserves the redox energy in a proton gradient. This chain is NADH-quinone oxidoreductase subunit B 1, found in Roseiflexus sp. (strain RS-1).